Consider the following 276-residue polypeptide: Rhomboid protease GlpG (276 aa).

Helical transmembrane passes span 94–114, 142–162, 169–189, 192–212, 229–249, and 252–272; these read GPFT…QNLL, AFMH…WYLG, IGSG…GFVQ, FSGP…GYVW, LILF…GMAI, and GAHV…TLHG. The Nucleophile role is filled by S201. H254 is a catalytic residue.

The protein belongs to the peptidase S54 family.

Its subcellular location is the cell inner membrane. The enzyme catalyses Cleaves type-1 transmembrane domains using a catalytic dyad composed of serine and histidine that are contributed by different transmembrane domains.. Rhomboid-type serine protease that catalyzes intramembrane proteolysis. This is Rhomboid protease GlpG from Klebsiella pneumoniae (strain 342).